The following is a 195-amino-acid chain: L-rhamnose-binding lectin CSL3 (195 aa).

SUEL-type lectin domains are found at residues 1-95 (AISI…YSCV) and 105-195 (ICEG…YTCD).

Its function is as follows. L-rhamnose binding lectin. Has hemagglutinating activity towards rabbit erythrocytes, human type A erythrocytes, human type B erythrocytes, human type O erythrocytes and sheep erythrocytes. Hemagglutinating activity is inhibited by smooth-type lipopolysaccharide (LPS) from S.flexneri 1A, A.salmonicida and E.coli K12, but not by rough-type LPS from S.flexneri, E.coli K12 and E.coli EH100. Agglutinates E.coli K12 and B.subtilis. This Oncorhynchus keta (Chum salmon) protein is L-rhamnose-binding lectin CSL3.